Reading from the N-terminus, the 486-residue chain is BTB/POZ domain and ankyrin repeat-containing protein BOP (486 aa).

A BTB domain is found at 25–115; the sequence is SDVTFSVEGR…LYSGQVSIVP (91 aa). A C2HC NPR-type zinc finger spans residues 121–135; that stretch reads RPNCGERGCWHTHCS. C124, C129, H131, and C134 together coordinate Zn(2+). 4 ANK repeats span residues 257 to 286, 287 to 316, 321 to 350, and 354 to 388; these read QKIRRMRRALDSSDVELVKLMVMGEGLNLD, EALALHYAVENCSREVAKALLELGAADVNY, AGKTPLHIAAEMVSPDMVAVLLDHHADPNV, and DNVTPLDILRTLTSDFLFKGAIPGLTHIEPNKLRL. Disordered stretches follow at residues 403-442 and 464-486; these read EEGNANNNPPSSTTTTLPMYHHPMNDDHNSSSSSGNNHNI and QMSDDHGGRHGDPAMYHHSHHDY. 2 stretches are compositionally biased toward low complexity: residues 406 to 418 and 432 to 442; these read NANNNPPSSTTTT and SSSSSGNNHNI. Residues 466 to 475 show a composition bias toward basic and acidic residues; that stretch reads SDDHGGRHGD.

This sequence belongs to the plant 'ANKYRIN-BTB/POZ' family. 'NOOT-BOP-COCH-like' (NBCL) subfamily. Homodimer. Expressed in xylem vessels and parenchyma cells of pedicel vascular tissue in the abscission zone (AZ). Accumulates in developing root nodules and present in roots, especially in the upper part.

Its subcellular location is the nucleus. The protein localises to the cytoplasm. It is found in the cell membrane. The protein operates within protein modification; protein ubiquitination. Functionally, may act as a substrate-specific adapter of an E3 ubiquitin-protein ligase complex (CUL3-RBX1-BTB) which mediates the ubiquitination and subsequent proteasomal degradation of target proteins. Transcriptional co-regulator involved in promoting the fate and determination of leaf and flower meristems. Required for the abscission of senescent organs, probably by regulating the cell wall disorganization in abscission zones (AZs, e.g. pulvini at the base of leaves). Involved in the coordination of the symbiotic nodule developmental program; promotes the formation of root nodules by interacting directly with APP1 to modulate the expression of the nuclear transcription factor Y subunit (NF-YA1), a key nodulin. Necessary for the robust maintenance of nodule identity throughout the nodule developmental program. The protein is BTB/POZ domain and ankyrin repeat-containing protein BOP of Lupinus luteus (European yellow lupine).